The following is a 908-amino-acid chain: 26S proteasome non-ATPase regulatory subunit 2 (908 aa).

Methionine 1 is modified (N-acetylmethionine). The segment at methionine 1–glutamine 51 is disordered. A phosphothreonine mark is found at threonine 9 and threonine 20. A compositionally biased stretch (polar residues) spans proline 10 to serine 22. Basic and acidic residues predominate over residues alanine 24–glutamine 51. 2 positions are modified to phosphoserine: serine 29 and serine 147. Residue tyrosine 194 is modified to Phosphotyrosine. Phosphoserine is present on residues serine 361 and serine 363. PC repeat units lie at residues serine 409–serine 442, glycine 443–leucine 479, glycine 480–valine 514, valine 517–lysine 551, and leucine 560–serine 589. Lysine 551 carries the N6-acetyllysine modification. Over residues lysine 623–proline 643 the composition is skewed to basic and acidic residues. Residues lysine 623–aspartate 645 form a disordered region. 2 PC repeats span residues leucine 692–tyrosine 723 and alanine 742–asparagine 757. Positions aspartate 708–asparagine 903 are required for interaction with UBLCP1.

It belongs to the proteasome subunit S2 family. As to quaternary structure, component of the 19S proteasome regulatory particle complex. The 26S proteasome consists of a 20S core particle (CP) and two 19S regulatory subunits (RP). The regulatory particle is made of a lid composed of 9 subunits, a base containing 6 ATPases and few additional components including PSMD2. Interacts with RPGRIP1L. Interacts with CRY1 in a KDM8-dependent manner. Interacts (via C-terminus) with phosphatase UBLCP1 (via ubiquitin-like domain); the interaction recruits UBLCP1 to the 19S regulatory particle where it dephosphorylates 19S subunit PSMC2/RPT1 which impairs PSMC2 ATPase activity and disrupts 26S proteasome assembly.

In terms of biological role, component of the 26S proteasome, a multiprotein complex involved in the ATP-dependent degradation of ubiquitinated proteins. This complex plays a key role in the maintenance of protein homeostasis by removing misfolded or damaged proteins, which could impair cellular functions, and by removing proteins whose functions are no longer required. Therefore, the proteasome participates in numerous cellular processes, including cell cycle progression, apoptosis, or DNA damage repair. Its function is as follows. Binds to the intracellular domain of tumor necrosis factor type 1 receptor. The binding domain of TRAP1 and TRAP2 resides outside the death domain of TNFR1. The chain is 26S proteasome non-ATPase regulatory subunit 2 (Psmd2) from Mus musculus (Mouse).